A 122-amino-acid polypeptide reads, in one-letter code: Large ribosomal subunit protein uL14 (122 aa).

It belongs to the universal ribosomal protein uL14 family. In terms of assembly, part of the 50S ribosomal subunit. Forms a cluster with proteins L3 and L19. In the 70S ribosome, L14 and L19 interact and together make contacts with the 16S rRNA in bridges B5 and B8.

Its function is as follows. Binds to 23S rRNA. Forms part of two intersubunit bridges in the 70S ribosome. This chain is Large ribosomal subunit protein uL14, found in Bifidobacterium animalis subsp. lactis (strain AD011).